Here is a 241-residue protein sequence, read N- to C-terminus: Octanoyltransferase (241 aa).

The 186-residue stretch at 43–228 (ADTPDEIWLV…RLTANLDGSP (186 aa)) folds into the BPL/LPL catalytic domain. Substrate contacts are provided by residues 83 to 90 (RGGQITYH), 159 to 161 (ALG), and 172 to 174 (GVS). Residue C190 is the Acyl-thioester intermediate of the active site.

Belongs to the LipB family.

The protein localises to the cytoplasm. It carries out the reaction octanoyl-[ACP] + L-lysyl-[protein] = N(6)-octanoyl-L-lysyl-[protein] + holo-[ACP] + H(+). The protein operates within protein modification; protein lipoylation via endogenous pathway; protein N(6)-(lipoyl)lysine from octanoyl-[acyl-carrier-protein]: step 1/2. Catalyzes the transfer of endogenously produced octanoic acid from octanoyl-acyl-carrier-protein onto the lipoyl domains of lipoate-dependent enzymes. Lipoyl-ACP can also act as a substrate although octanoyl-ACP is likely to be the physiological substrate. This chain is Octanoyltransferase, found in Paraburkholderia phytofirmans (strain DSM 17436 / LMG 22146 / PsJN) (Burkholderia phytofirmans).